A 61-amino-acid chain; its full sequence is MAKKSMIIRALRKPKYKTRQNNRCKLCGRPRGYLRDFCMCRICFRKYASEGLIPGVSKSSW.

Residues Cys24, Cys27, Cys40, and Cys43 each contribute to the Zn(2+) site.

The protein belongs to the universal ribosomal protein uS14 family. Zinc-binding uS14 subfamily. In terms of assembly, part of the 30S ribosomal subunit. Contacts proteins S3 and S10. The cofactor is Zn(2+).

In terms of biological role, binds 16S rRNA, required for the assembly of 30S particles and may also be responsible for determining the conformation of the 16S rRNA at the A site. The protein is Small ribosomal subunit protein uS14 of Borreliella burgdorferi (strain ATCC 35210 / DSM 4680 / CIP 102532 / B31) (Borrelia burgdorferi).